The chain runs to 145 residues: Small ribosomal subunit protein uS12 (145 aa).

Belongs to the universal ribosomal protein uS12 family. As to quaternary structure, component of the small ribosomal subunit. Mature ribosomes consist of a small (40S) and a large (60S) subunit. The 40S subunit contains about 32 different proteins and 1 molecule of RNA (18S). The 60S subunit contains 45 different proteins and 3 molecules of RNA (25S, 5.8S and 5S).

The protein localises to the cytoplasm. Its function is as follows. Component of the ribosome, a large ribonucleoprotein complex responsible for the synthesis of proteins in the cell. The small ribosomal subunit (SSU) binds messenger RNAs (mRNAs) and translates the encoded message by selecting cognate aminoacyl-transfer RNA (tRNA) molecules. The large subunit (LSU) contains the ribosomal catalytic site termed the peptidyl transferase center (PTC), which catalyzes the formation of peptide bonds, thereby polymerizing the amino acids delivered by tRNAs into a polypeptide chain. The nascent polypeptides leave the ribosome through a tunnel in the LSU and interact with protein factors that function in enzymatic processing, targeting, and the membrane insertion of nascent chains at the exit of the ribosomal tunnel. This is Small ribosomal subunit protein uS12 (RPS23A) from Candida albicans (strain SC5314 / ATCC MYA-2876) (Yeast).